The sequence spans 396 residues: Acetyl-CoA acetyltransferase ERG10, cytosolic (396 aa).

The Acyl-thioester intermediate role is filled by C91. Position 186 (Y186) interacts with K(+). Residues N227 and K230 each contribute to the CoA site. Residues A246, P247, and V347 each contribute to the K(+) site. Active-site proton acceptor residues include H351 and C381. N382 serves as a coordination point for chloride.

This sequence belongs to the thiolase-like superfamily. Thiolase family. Homotetramer. Requires K(+) as cofactor.

The protein localises to the cytoplasm. Its subcellular location is the cytosol. The enzyme catalyses 2 acetyl-CoA = acetoacetyl-CoA + CoA. It functions in the pathway metabolic intermediate biosynthesis; (R)-mevalonate biosynthesis; (R)-mevalonate from acetyl-CoA: step 1/3. Functionally, acetyl-CoA acetyltransferase; part of the first module of ergosterol biosynthesis pathway that includes the early steps of the pathway, conserved across all eukaryotes, and which results in the formation of mevalonate from acetyl-coenzyme A (acetyl-CoA). ERG10B catalyzes the formation of acetoacetyl-CoA from acetyl-CoA. The first module starts with the action of the cytosolic acetyl-CoA acetyltransferase ERG10B that catalyzes the formation of acetoacetyl-CoA. The hydroxymethylglutaryl-CoA synthases ERG13 then condenses acetyl-CoA with acetoacetyl-CoA to form HMG-CoA. The rate-limiting step of the early module is the reduction to mevalonate by the 3-hydroxy-3-methylglutaryl-coenzyme A (HMG-CoA) reductases HMG1. This chain is Acetyl-CoA acetyltransferase ERG10, cytosolic, found in Gibberella zeae (strain ATCC MYA-4620 / CBS 123657 / FGSC 9075 / NRRL 31084 / PH-1) (Wheat head blight fungus).